We begin with the raw amino-acid sequence, 435 residues long: Ribulose bisphosphate carboxylase large chain (435 aa).

At K5 the chain carries N6,N6,N6-trimethyllysine. Residues N114 and T164 each contribute to the substrate site. K166 (proton acceptor) is an active-site residue. K168 is a substrate binding site. The Mg(2+) site is built by K192, D194, and E195. K192 bears the N6-carboxylysine mark. The active-site Proton acceptor is the H285. 3 residues coordinate substrate: R286, H318, and S370.

The protein belongs to the RuBisCO large chain family. Type I subfamily. As to quaternary structure, heterohexadecamer of 8 large chains and 8 small chains; disulfide-linked. The disulfide link is formed within the large subunit homodimers. The cofactor is Mg(2+). The disulfide bond which can form in the large chain dimeric partners within the hexadecamer appears to be associated with oxidative stress and protein turnover.

The protein resides in the plastid. It is found in the chloroplast. The enzyme catalyses 2 (2R)-3-phosphoglycerate + 2 H(+) = D-ribulose 1,5-bisphosphate + CO2 + H2O. The catalysed reaction is D-ribulose 1,5-bisphosphate + O2 = 2-phosphoglycolate + (2R)-3-phosphoglycerate + 2 H(+). In terms of biological role, ruBisCO catalyzes two reactions: the carboxylation of D-ribulose 1,5-bisphosphate, the primary event in carbon dioxide fixation, as well as the oxidative fragmentation of the pentose substrate in the photorespiration process. Both reactions occur simultaneously and in competition at the same active site. The sequence is that of Ribulose bisphosphate carboxylase large chain from Drosera burmannii (Burmese sundew).